Here is a 396-residue protein sequence, read N- to C-terminus: NADH-quinone oxidoreductase subunit D 2 (396 aa).

The protein belongs to the complex I 49 kDa subunit family. In terms of assembly, NDH-1 is composed of 14 different subunits. Subunits NuoB, C, D, E, F, and G constitute the peripheral sector of the complex.

The protein resides in the cell inner membrane. It carries out the reaction a quinone + NADH + 5 H(+)(in) = a quinol + NAD(+) + 4 H(+)(out). NDH-1 shuttles electrons from NADH, via FMN and iron-sulfur (Fe-S) centers, to quinones in the respiratory chain. The immediate electron acceptor for the enzyme in this species is believed to be ubiquinone. Couples the redox reaction to proton translocation (for every two electrons transferred, four hydrogen ions are translocated across the cytoplasmic membrane), and thus conserves the redox energy in a proton gradient. The protein is NADH-quinone oxidoreductase subunit D 2 of Beijerinckia indica subsp. indica (strain ATCC 9039 / DSM 1715 / NCIMB 8712).